The primary structure comprises 330 residues: Clp protease adapter protein ClpF, chloroplastic (330 aa).

The N-terminal 65 residues, 1-65, are a transit peptide targeting the chloroplast; that stretch reads MVQSQSLSTL…KSLKQRNLLR (65 aa). Residues 66 to 138 form an NTD, required for CLPS1-binding region; the sequence is VEARWPFQGG…VEEESIRLQE (73 aa). 2 coiled-coil regions span residues 112–139 and 175–195; these read NLEQYDIAQQLREKLTEVEEESIRLQEG and AAKLRDEISKLEAESLAVSAK. In terms of domain architecture, UVR spans 153–188; that stretch reads GISIIRLRADLQNAIDSEDYGLAAKLRDEISKLEAE. A yccV-like region spans residues 203 to 310; it reads EYAFRLGQKL…TAGDFIPVKQ (108 aa).

As to quaternary structure, binds to CLPC1 and CLPC2. Interacts with ClpS1; this interaction stimulates their association with ClpC. Associates with the Clp substrate HEMA1 (GluTR). Expressed constitutively in photosynthetic tissues such as leaves, stems and flowers, and, at low levels, in siliques.

The protein localises to the plastid. It is found in the chloroplast. Clp protease adapter that facilitates CLPS1 recruitment to ClpC chaperones thus forming a binary adapter for selective substrate recognition and delivery to plastid Clp protease system (CLPC). In Arabidopsis thaliana (Mouse-ear cress), this protein is Clp protease adapter protein ClpF, chloroplastic.